We begin with the raw amino-acid sequence, 312 residues long: Glycerol-3-phosphate dehydrogenase [NAD(P)+] (312 aa).

NADPH is bound by residues W11, R30, R31, and K95. The sn-glycerol 3-phosphate site is built by K95, G123, and S125. A127 is an NADPH binding site. K177, D230, S240, R241, and N242 together coordinate sn-glycerol 3-phosphate. K177 serves as the catalytic Proton acceptor. R241 is a binding site for NADPH. The NADPH site is built by V265 and E267.

It belongs to the NAD-dependent glycerol-3-phosphate dehydrogenase family.

Its subcellular location is the cytoplasm. It carries out the reaction sn-glycerol 3-phosphate + NAD(+) = dihydroxyacetone phosphate + NADH + H(+). It catalyses the reaction sn-glycerol 3-phosphate + NADP(+) = dihydroxyacetone phosphate + NADPH + H(+). It functions in the pathway membrane lipid metabolism; glycerophospholipid metabolism. In terms of biological role, catalyzes the reduction of the glycolytic intermediate dihydroxyacetone phosphate (DHAP) to sn-glycerol 3-phosphate (G3P), the key precursor for phospholipid synthesis. The protein is Glycerol-3-phosphate dehydrogenase [NAD(P)+] of Helicobacter acinonychis (strain Sheeba).